We begin with the raw amino-acid sequence, 154 residues long: MSATRAKKVKMATKSCPECDQQIPVACKSCPCGYIFISRKLLNAKHSEKSPPSTENKHEAKRRRTERVRREKINSTVNKDLENRKRSRSNSHSDHIRRGRGRPKSSSAKKHEEEREKQEKEIDIYANLSDEKAFVFSVALAEINRKIINQRLIL.

Residues 43–119 (NAKHSEKSPP…KHEEEREKQE (77 aa)) are disordered. Basic and acidic residues predominate over residues 68 to 84 (VRREKINSTVNKDLENR). The residue at position 91 (serine 91) is a Phosphoserine. The stretch at 104–132 (KSSSAKKHEEEREKQEKEIDIYANLSDEK) forms a coiled coil. The span at 109-119 (KKHEEEREKQE) shows a compositional bias: basic and acidic residues.

This sequence belongs to the UPF0547 family.

In Mus musculus (Mouse), this protein is UPF0547 protein C16orf87 homolog.